Here is a 478-residue protein sequence, read N- to C-terminus: RNA-binding protein 42 (478 aa).

Over residues 1 to 20 the composition is skewed to low complexity; it reads MASAMAGAGPAPGLPVAGGP. A disordered region spans residues 1-33; it reads MASAMAGAGPAPGLPVAGGPVVPGPGVGIPGKS. Ala-2 is subject to N-acetylalanine. Ser-133 bears the Phosphoserine mark. Asymmetric dimethylarginine occurs at positions 151, 156, 166, and 179. 2 disordered regions span residues 171–207 and 317–354; these read LSSAAGGPRPMALRPPHQALVGPPLPGPPGPPMMLPP and SLRPRPRPPRPEPPPGLMALEVPEPLGEDKKKGKPEKL. A compositionally biased stretch (pro residues) spans 193–205; sequence PPLPGPPGPPMML. Residues 234 to 478 are necessary for interaction with HNRNPK; that stretch reads ELGLGLGLGL…QKEKKKLGLR (245 aa). Residues 343-354 are compositionally biased toward basic and acidic residues; sequence GEDKKKGKPEKL. Residues 379–457 enclose the RRM domain; it reads FRIFCGDLGN…RPIKLRKSMW (79 aa).

Belongs to the RRM RBM42 family. In terms of assembly, interacts with HNRNPK. In terms of tissue distribution, expressed in cell lines (at protein level). Expressed in heart, brain, spleen, lung, liver, skeletal muscle, kidney and testis.

It is found in the nucleus. It localises to the cytoplasm. Its function is as follows. Binds (via the RRM domain) to the 3'-untranslated region (UTR) of CDKN1A mRNA. This Mus musculus (Mouse) protein is RNA-binding protein 42 (Rbm42).